The following is a 126-amino-acid chain: Holo-[acyl-carrier-protein] synthase (126 aa).

The Mg(2+) site is built by aspartate 9 and glutamate 58.

Belongs to the P-Pant transferase superfamily. AcpS family. It depends on Mg(2+) as a cofactor.

Its subcellular location is the cytoplasm. The enzyme catalyses apo-[ACP] + CoA = holo-[ACP] + adenosine 3',5'-bisphosphate + H(+). Its function is as follows. Transfers the 4'-phosphopantetheine moiety from coenzyme A to a Ser of acyl-carrier-protein. This is Holo-[acyl-carrier-protein] synthase from Vibrio vulnificus (strain YJ016).